Reading from the N-terminus, the 461-residue chain is Photosystem II CP43 reaction center protein (461 aa).

The propeptide occupies 1–2 (ME). Threonine 3 is modified (N-acetylthreonine). The residue at position 3 (threonine 3) is a Phosphothreonine. Helical transmembrane passes span 57 to 81 (LFEVAHFIPEKPMYEQGLILLPHLA), 122 to 143 (LIGPETLEESFPFFGYVWKDKN), 166 to 188 (KAMYFGGLFDPWSVGGGDVRVIT), 243 to 263 (KPWAWARRAFVWSGEAYLSYS), and 279 to 300 (WFNNTVYPSEFYGPTGPEASQS). Glutamate 355 is a [CaMn4O5] cluster binding site. The helical transmembrane segment at 435–459 (RARAAAAGFEKGIDRDNEPVLSMKP) threads the bilayer.

This sequence belongs to the PsbB/PsbC family. PsbC subfamily. PSII is composed of 1 copy each of membrane proteins PsbA, PsbB, PsbC, PsbD, PsbE, PsbF, PsbH, PsbI, PsbJ, PsbK, PsbL, PsbM, PsbT, PsbX, PsbY, PsbZ, Psb30/Ycf12, at least 3 peripheral proteins of the oxygen-evolving complex and a large number of cofactors. It forms dimeric complexes. It depends on Binds multiple chlorophylls and provides some of the ligands for the Ca-4Mn-5O cluster of the oxygen-evolving complex. It may also provide a ligand for a Cl- that is required for oxygen evolution. PSII binds additional chlorophylls, carotenoids and specific lipids. as a cofactor.

It localises to the plastid. Its subcellular location is the chloroplast thylakoid membrane. Functionally, one of the components of the core complex of photosystem II (PSII). It binds chlorophyll and helps catalyze the primary light-induced photochemical processes of PSII. PSII is a light-driven water:plastoquinone oxidoreductase, using light energy to abstract electrons from H(2)O, generating O(2) and a proton gradient subsequently used for ATP formation. The protein is Photosystem II CP43 reaction center protein of Tupiella akineta (Green alga).